The sequence spans 1771 residues: MAISSTADLAPSRKARGSESNDRALKLFIELLSVETQQQLFRGEPCIQRFVEIGPRTILSTMAKRSASIQKDQRSSASCYSPEFLSYHDNQPEILYQYQNDQAIYPLSQPTQPQFEPTSPSHLTKRSPSPSKALPMSAIPSAELTLQAGHVILAMTAQKLRRRFDQVPVEKTIRDLSGGKSTLQNELTGDLVAEFGRVPEGVEDQPLSSLAESFQPEFSGIPGKAMSTLISRFISGKMPAGFNQSAIQEYLNSRWGLTKSHATIPLCFAPTMEPARRLANADEARAYLDDLVEKHAAFQGISLVPSNQVADGHESLAPVVMNVADVDEMNKRTKLYRAQFDSLASYLGVDYFASEKAMSESESRIAELEETIRLLNTELDEQFIKGIKPSFNIKQVRKYDSWWNWSREELIRLLNEICQDSSSACPPDMENRLQNLLNKWDANCSEIVRAHLIGLQSRSSAPMNKLQLILEEIFTLGNQTLSIDPLFVHNLPPMGPQTIITDAGCLEYHELPRQISHYPEAMAYGPPWPQGHTSAPFIHIKTREDGQDWMYDSKATSIYHAMLDVGVTTGLTFTHKAVLVTGAGPSSIAASVIQGLLSGGARIIVTTSRSISQSADFYQQMYRQYGAKGSSLSLFPFNQASKQDCEQLVQHIYGPDSPTDGDLDYILPFAAIPQVGEPDAFGGRQELALRAMLVNILRLIGFVRQEKERLRIENRPTMIVLPMSCNEGTFGGDGLYSEAKIGLKALFNRFYSENWSKYLTICGAVIGWTRGTAIMQTSNAVAEEVEKLGVITFTQAEMAFNILALMTPALTALAEDTPIYADLTGGLGSMWNIKQEISAARKRISERQILQIAIAEEDAREQAMICSASTDVESGLPTTRHARLGLQFPPLPDVNEGYPNIEGMIDLTRIPVIVGYSELGPWGNARTRWEIEHRGDFSLEGYIEMAWIMGLIKHVDGHAKGRPYVGWVDADTETPIQDYEVPHKYHKHIMAHAGLRLIKPTKLDSYDPSRKELLHEVAVEEDLAPFETSKSTAEAFKLRHGDCVTLLPIADSDNCRVYIKKGAVLMIPKAVPFDQVVAGRIPEGWDPARYGIPEEIVQQVDVTTLYALCCVSEAFLSAGIKDPYEIYQYIHVSELANCLGSGGGPMKVIQNMYRDRFLDRQIRGDIILEHFVNTMGAWVNMLLLSATGPLKTPVGACATAIESLDIGCEAIQNGRCKVAVVGGCDDYGEELAFEFANIKATANSTEELSKGRTPADISRPTASSRSGFAESAGCGVQILMSAALAIEMGLPIYGVVAYTHMASDQIGRSIPAPGKGILTAARENGQAKESPLLDLNFRRAVFDAEVALINKSHPKQATTLKPDHSETSNAASLRIRDAQNRWANNIRLSDPSISPIRASLATWGLTVDDIKVVSMHGTSTKANEVNEGNVINTQMRHLGRQMGNPLLAVCQKSLTGHPKAGAGAWQLNGCLQMMQENIVPGNRNADNIDKQLREFEHIVYPMESLRVPEIKATLLTSFGFGQKGAINIMVSPRYLFASLSNSDYEDYRSRTTKRQRSATPTFVSRIMKNNLVQVKTRPPWNDPEAMQNFFLDPNSRVVDGQITRAPRTAYKHQDISVPQSAAVSVNEALHAMLATTDHSSPAASASVGVDVEEISSINVDNPIFISRNFTLLERDYCLSAPDPRASFAGRWVAKEAAFKSLQTTSTGAGTAMDQIEILEVGGIPKVVRLTSQLHGHAHEVAFAQGITNIQITISHCNNTAIAVALALRKND.

Over residues 108–130 (SQPTQPQFEPTSPSHLTKRSPSP) the composition is skewed to polar residues. The disordered stretch occupies residues 108 to 133 (SQPTQPQFEPTSPSHLTKRSPSPSKA). Positions 143 to 221 (ELTLQAGHVI…ESFQPEFSGI (79 aa)) constitute a Carrier domain. Ser181 carries the O-(pantetheine 4'-phosphoryl)serine modification. Residues 575 to 771 (HKAVLVTGAG…CGAVIGWTRG (197 aa)) form a beta-ketoacyl reductase region. In terms of domain architecture, Ketosynthase family 3 (KS3) spans 1011-1531 (KELLHEVAVE…QKGAINIMVS (521 aa)). Residues Cys1197, His1416, and His1457 each act as for beta-ketoacyl synthase activity in the active site. Mg(2+)-binding residues include Asp1650, Val1651, and Glu1652. Acetyl-CoA is bound by residues 1650-1652 (DVE), Tyr1676, Ser1686, 1695-1705 (EAAFKSLQTTS), 1719-1722 (EVGG), and 1753-1755 (ISH). Ser1754 and His1755 together coordinate Mg(2+).

This sequence belongs to the thiolase-like superfamily. Fungal fatty acid synthetase subunit alpha family. [Alpha(6)beta(6)] hexamers of two multifunctional subunits (alpha and beta).

The catalysed reaction is acetyl-CoA + n malonyl-CoA + 2n NADPH + 4n H(+) = a long-chain-acyl-CoA + n CoA + n CO2 + 2n NADP(+).. The enzyme catalyses a fatty acyl-[ACP] + malonyl-[ACP] + H(+) = a 3-oxoacyl-[ACP] + holo-[ACP] + CO2. It catalyses the reaction a (3R)-hydroxyacyl-[ACP] + NADP(+) = a 3-oxoacyl-[ACP] + NADPH + H(+). It functions in the pathway secondary metabolite biosynthesis. In terms of biological role, fatty acid synthase alpha subunit; part of the pki gene cluster that mediates the biosynthesis of 2,4-dihydroxy-3-methyl-6-(2-oxoundecyl)benzaldehyde. The first step in the pathway is the generation of the decanoyl starter unit by the FAS composed of subunits pkiB and pkiC, which is then transferred directly from the FAS to the SAT domain of the non-reducing polyketide synthase pkiA. PkiA condenses the decanoyyl starter unit with 4 malonyl-CoA units and performs one methylation step to yield 2,4-dihydroxy-3-methyl-6-(2-oxoundecyl)benzaldehyde. The protein is Fatty acid synthase alpha subunit pkiB of Emericella nidulans (strain FGSC A4 / ATCC 38163 / CBS 112.46 / NRRL 194 / M139) (Aspergillus nidulans).